The chain runs to 313 residues: Protein sprouty homolog 2 (313 aa).

The span at 1 to 14 (METRVQHGSGSQAL) shows a compositional bias: polar residues. 2 disordered regions span residues 1–31 (METRVQHGSGSQALLQARRDSGRPHGEPDLR) and 54–146 (EYTE…VADG). Composition is skewed to basic and acidic residues over residues 17 to 31 (ARRDSGRPHGEPDLR) and 78 to 89 (KSERPHGLPEHR). Over residues 108-131 (SRSISTVSTGSRSSTRTSTSSNSS) the composition is skewed to low complexity. The span at 132–141 (EQRLLGSSSG) shows a compositional bias: polar residues. Positions 175–289 (RCEDCGKCKC…CYDRVNRPGC (115 aa)) constitute an SPR domain.

Belongs to the sprouty family. In terms of tissue distribution, brain and interlimb region.

Its subcellular location is the cytoplasm. It is found in the membrane. Acts as an antagonist of FGF-induced retinal lens fiber differentiation. Inhibits TGFB-induced epithelial-to-mesenchymal transition in retinal lens epithelial cells. May play an important role in FGF-mediated patterning of the mid/hindbrain region by acting to modulate the signaling effects of FGF8. The chain is Protein sprouty homolog 2 (SPRY2) from Gallus gallus (Chicken).